A 208-amino-acid chain; its full sequence is Small ribosomal subunit protein eS8 (208 aa).

The segment at 1–27 (MGISRDNWHKRRKTGGKRKPYHKKRKY) is disordered. Gly2 carries the N-myristoyl glycine lipid modification. The segment covering 8-26 (WHKRRKTGGKRKPYHKKRK) has biased composition (basic residues). N6-acetyllysine occurs at positions 37 and 128. Residue Thr130 is modified to Phosphothreonine. Position 160 is a phosphoserine (Ser160). Glycyl lysine isopeptide (Lys-Gly) (interchain with G-Cter in SUMO2) cross-links involve residues Lys170 and Lys193.

This sequence belongs to the eukaryotic ribosomal protein eS8 family. Component of the small ribosomal subunit. Identified in a IGF2BP1-dependent mRNP granule complex containing untranslated mRNAs. Part of the small subunit (SSU) processome, composed of more than 70 proteins and the RNA chaperone small nucleolar RNA (snoRNA) U3.

Its subcellular location is the cytoplasm. It is found in the membrane. The protein localises to the nucleus. The protein resides in the nucleolus. Functionally, component of the small ribosomal subunit. The ribosome is a large ribonucleoprotein complex responsible for the synthesis of proteins in the cell. Part of the small subunit (SSU) processome, first precursor of the small eukaryotic ribosomal subunit. During the assembly of the SSU processome in the nucleolus, many ribosome biogenesis factors, an RNA chaperone and ribosomal proteins associate with the nascent pre-rRNA and work in concert to generate RNA folding, modifications, rearrangements and cleavage as well as targeted degradation of pre-ribosomal RNA by the RNA exosome. This is Small ribosomal subunit protein eS8 (Rps8) from Mus musculus (Mouse).